Consider the following 408-residue polypeptide: Intracellular coagulation inhibitor 2 (408 aa).

Positions 1-22 (MLSRRTLDCCLVMLIVSTTFCQ) are cleaved as a signal peptide. A disulfide bridge connects residues Cys50 and Cys249. A glycan (N-linked (GlcNAc...) asparagine) is linked at Asn174.

It belongs to the serpin family. Monomer. Forms a covalent heterodimer with clotting factor C chain B. Forms a covalent heterodimer with proclotting enzyme heavy chain. Specifically expressed in hemocytes (at protein level).

The protein resides in the secreted. Its function is as follows. Serine protease inhibitor that inhibits proclotting enzyme and to a lesser extent clotting factor C and clotting factor G. The sequence is that of Intracellular coagulation inhibitor 2 from Tachypleus tridentatus (Japanese horseshoe crab).